The chain runs to 652 residues: Nucleolar GTP-binding protein 1 (652 aa).

Residues 169-341 enclose the OBG-type G domain; the sequence is RTIIICGFPN…VKTEACERLL (173 aa). GTP is bound by residues 175 to 182, 221 to 225, and 289 to 292; these read GFPNVGKS, DTPGI, and NKID. The disordered stretch occupies residues 501-521; sequence RLSSRKNKPVIPRNKQPKVRD.

The protein belongs to the TRAFAC class OBG-HflX-like GTPase superfamily. OBG GTPase family. NOG subfamily.

It is found in the nucleus. The protein localises to the nucleolus. In terms of biological role, involved in the biogenesis of the 60S ribosomal subunit. Required for normal assembly of the mitotic spindle. May be involved in both centrosome-dependent and centrosome-independent spindle assembly programs. Acts as a TP53 repressor, preventing TP53 stabilization and cell cycle arrest. The sequence is that of Nucleolar GTP-binding protein 1 from Drosophila melanogaster (Fruit fly).